A 308-amino-acid polypeptide reads, in one-letter code: tRNA dimethylallyltransferase (308 aa).

9 to 16 (GPTAVGKT) is an ATP binding site. A substrate-binding site is contributed by 11–16 (TAVGKT). The interval 34 to 37 (DSMQ) is interaction with substrate tRNA.

The protein belongs to the IPP transferase family. In terms of assembly, monomer. Mg(2+) serves as cofactor.

The enzyme catalyses adenosine(37) in tRNA + dimethylallyl diphosphate = N(6)-dimethylallyladenosine(37) in tRNA + diphosphate. Functionally, catalyzes the transfer of a dimethylallyl group onto the adenine at position 37 in tRNAs that read codons beginning with uridine, leading to the formation of N6-(dimethylallyl)adenosine (i(6)A). This Lactobacillus delbrueckii subsp. bulgaricus (strain ATCC BAA-365 / Lb-18) protein is tRNA dimethylallyltransferase.